We begin with the raw amino-acid sequence, 315 residues long: Nucleotide-binding protein CGSHiEE_06315 (315 aa).

Residue 8 to 15 (GRSGAGKS) participates in ATP binding. 56–59 (DIRN) contacts GTP.

This sequence belongs to the RapZ-like family.

Its function is as follows. Displays ATPase and GTPase activities. The protein is Nucleotide-binding protein CGSHiEE_06315 of Haemophilus influenzae (strain PittEE).